The chain runs to 225 residues: Tryptophan synthase beta chain (225 aa).

Belongs to the TrpB family. In terms of assembly, tetramer of two alpha and two beta chains. Requires pyridoxal 5'-phosphate as cofactor.

The catalysed reaction is (1S,2R)-1-C-(indol-3-yl)glycerol 3-phosphate + L-serine = D-glyceraldehyde 3-phosphate + L-tryptophan + H2O. The protein operates within amino-acid biosynthesis; L-tryptophan biosynthesis; L-tryptophan from chorismate: step 5/5. In terms of biological role, the beta subunit is responsible for the synthesis of L-tryptophan from indole and L-serine. The polypeptide is Tryptophan synthase beta chain (trpB) (Buchnera aphidicola subsp. Rhopalosiphum padi).